Consider the following 158-residue polypeptide: uncharacterized protein (158 aa).

This is an uncharacterized protein from Archaeoglobus fulgidus (strain ATCC 49558 / DSM 4304 / JCM 9628 / NBRC 100126 / VC-16).